Reading from the N-terminus, the 502-residue chain is Glutamate--tRNA ligase (502 aa).

The short motif at 12–22 (PSPTGYLHVGG) is the 'HIGH' region element. Positions 259-263 (KLSKR) match the 'KMSKS' region motif. Position 262 (K262) interacts with ATP.

The protein belongs to the class-I aminoacyl-tRNA synthetase family. Glutamate--tRNA ligase type 1 subfamily. As to quaternary structure, monomer.

It is found in the cytoplasm. It carries out the reaction tRNA(Glu) + L-glutamate + ATP = L-glutamyl-tRNA(Glu) + AMP + diphosphate. Its function is as follows. Catalyzes the attachment of glutamate to tRNA(Glu) in a two-step reaction: glutamate is first activated by ATP to form Glu-AMP and then transferred to the acceptor end of tRNA(Glu). This is Glutamate--tRNA ligase from Pelodictyon phaeoclathratiforme (strain DSM 5477 / BU-1).